The following is a 557-amino-acid chain: Formate--tetrahydrofolate ligase 2 (557 aa).

66–73 (TPAGEGKT) is a binding site for ATP.

It belongs to the formate--tetrahydrofolate ligase family.

The enzyme catalyses (6S)-5,6,7,8-tetrahydrofolate + formate + ATP = (6R)-10-formyltetrahydrofolate + ADP + phosphate. The protein operates within one-carbon metabolism; tetrahydrofolate interconversion. The polypeptide is Formate--tetrahydrofolate ligase 2 (Streptococcus pyogenes serotype M5 (strain Manfredo)).